A 474-amino-acid polypeptide reads, in one-letter code: MAYDDLRSFLDTLEKEGQLLRITDEVLPEPDLAAAANATGRIGENAPALHFDNVKGFTDARIAMNVHGSWANHALALGLPKNTPVKEQVEEFARRWDAFPVAPERREEAPWRENTQEGEDVDLFSVLPLFRLNDGDGGFYLDKAAVVSRDPEDRDDFGKQNVGTYRIQVIGTNRLAFHPAMHDVAQHLRKAEEKGEDLPIAITLGNDPVMAIVAGMPMAYDQSEYEMAGALRGAPAPIATAPLTGFDVPWGSEVVIEGVIESRKRRIEGPFGEFTGHYSGGRRMPVIRVERVSYRHEPVFESLYLGMPWNECDYLVGPNTCVPLLKQLRAEFPEVQAVNAMYTHGLMVIISTAKRYGGFAKAVGMRAMTTPHGLGYVAQVILVDEDVDPFNLPQVMWAMSAKVNPKDDVVVIPNLSVLELAPAAQPAGISSKMIIDATTPVAPDVRGNFSTPAKDLPETAEWAARLQRLIAARV.

Positions 161, 182, and 224 each coordinate Mn(2+). Prenylated FMN-binding positions include 161-166 (NVGTYR) and 181-182 (MH). Glu-273 (proton donor) is an active-site residue.

This sequence belongs to the UbiD family. YclC subfamily. Prenylated FMN is required as a cofactor. The cofactor is Mn(2+).

It catalyses the reaction vanillate + H(+) = guaiacol + CO2. In terms of biological role, involved in the non-oxidative decarboxylation and detoxification of phenolic derivatives under both aerobic and anaerobic conditions. Phenolic acid decarboxylase that catalyzes the reversible decarboxylation of vanillate. This is Phenolic acid decarboxylase from Streptomyces sp. (strain D7).